The chain runs to 194 residues: Thymidine kinase (194 aa).

Residues 15 to 22 (GSMFSGKS) and 88 to 91 (DEVQ) contribute to the ATP site. The Proton acceptor role is filled by glutamate 89. Residues cysteine 145, cysteine 148, cysteine 183, and histidine 186 each coordinate Zn(2+).

Belongs to the thymidine kinase family. Homotetramer.

The protein resides in the cytoplasm. It catalyses the reaction thymidine + ATP = dTMP + ADP + H(+). In Bacillus licheniformis (strain ATCC 14580 / DSM 13 / JCM 2505 / CCUG 7422 / NBRC 12200 / NCIMB 9375 / NCTC 10341 / NRRL NRS-1264 / Gibson 46), this protein is Thymidine kinase.